Consider the following 439-residue polypeptide: Xylose isomerase (439 aa).

Catalysis depends on residues His-101 and Asp-104. Mg(2+) is bound by residues Glu-232, Glu-268, His-271, Asp-296, Asp-307, Asp-309, and Asp-339.

The protein belongs to the xylose isomerase family. In terms of assembly, homotetramer. The cofactor is Mg(2+).

Its subcellular location is the cytoplasm. It catalyses the reaction alpha-D-xylose = alpha-D-xylulofuranose. This chain is Xylose isomerase, found in Histophilus somni (strain 2336) (Haemophilus somnus).